The primary structure comprises 310 residues: Formimidoylglutamase (310 aa).

H120, D148, H150, D152, D233, and D235 together coordinate Mn(2+).

The protein belongs to the arginase family. Mn(2+) serves as cofactor.

It carries out the reaction N-formimidoyl-L-glutamate + H2O = formamide + L-glutamate. The protein operates within amino-acid degradation; L-histidine degradation into L-glutamate; L-glutamate from N-formimidoyl-L-glutamate (hydrolase route): step 1/1. Its function is as follows. Catalyzes the conversion of N-formimidoyl-L-glutamate to L-glutamate and formamide. This is Formimidoylglutamase from Nocardia farcinica (strain IFM 10152).